The sequence spans 629 residues: tRNA uridine 5-carboxymethylaminomethyl modification enzyme MnmG (629 aa).

FAD is bound by residues glycine 15–glycine 20, valine 127, and serine 182. The disordered stretch occupies residues threonine 203–proline 226. Positions serine 215–proline 226 are enriched in basic and acidic residues. Glycine 274–phenylalanine 288 contacts NAD(+). Glutamine 371 provides a ligand contact to FAD.

The protein belongs to the MnmG family. Homodimer. Heterotetramer of two MnmE and two MnmG subunits. FAD is required as a cofactor.

The protein resides in the cytoplasm. NAD-binding protein involved in the addition of a carboxymethylaminomethyl (cmnm) group at the wobble position (U34) of certain tRNAs, forming tRNA-cmnm(5)s(2)U34. In Listeria innocua serovar 6a (strain ATCC BAA-680 / CLIP 11262), this protein is tRNA uridine 5-carboxymethylaminomethyl modification enzyme MnmG.